The primary structure comprises 684 residues: DNA-directed RNA polymerase subunit beta' (684 aa).

Residues Cys-69, Cys-71, Cys-87, and Cys-90 each coordinate Zn(2+). Mg(2+)-binding residues include Asp-489, Asp-491, and Asp-493.

The protein belongs to the RNA polymerase beta' chain family. RpoC1 subfamily. In plastids the minimal PEP RNA polymerase catalytic core is composed of four subunits: alpha, beta, beta', and beta''. When a (nuclear-encoded) sigma factor is associated with the core the holoenzyme is formed, which can initiate transcription. Mg(2+) serves as cofactor. Requires Zn(2+) as cofactor.

The protein resides in the plastid. The protein localises to the chloroplast. The catalysed reaction is RNA(n) + a ribonucleoside 5'-triphosphate = RNA(n+1) + diphosphate. Functionally, DNA-dependent RNA polymerase catalyzes the transcription of DNA into RNA using the four ribonucleoside triphosphates as substrates. This chain is DNA-directed RNA polymerase subunit beta', found in Marchantia polymorpha (Common liverwort).